We begin with the raw amino-acid sequence, 267 residues long: MADS-box transcription factor 15 (267 aa).

An MADS-box domain is found at 1 to 61; it reads MGRGKVQLKR…GKLYEYATDS (61 aa). Residues 88–178 enclose the K-box domain; that stretch reads EGNWCHEYRK…QKELVERQKN (91 aa). The segment at 179–215 is disordered; sequence VRGQQQVGQWDQTQVQAQAQAQPQAQTSSSSSSMLRD. Residues 182-215 are compositionally biased toward low complexity; it reads QQQVGQWDQTQVQAQAQAQPQAQTSSSSSSMLRD.

May interact with the K-box of MADS1 and MADS6.

Its subcellular location is the nucleus. Functionally, probable transcription factor. This Oryza sativa subsp. japonica (Rice) protein is MADS-box transcription factor 15 (MADS15).